The sequence spans 323 residues: tRNA U34 carboxymethyltransferase (323 aa).

Residues Lys91, Trp105, Lys110, Gly130, 152-154 (DPT), 181-182 (IE), Met196, Tyr200, and Arg315 each bind carboxy-S-adenosyl-L-methionine.

This sequence belongs to the class I-like SAM-binding methyltransferase superfamily. CmoB family. In terms of assembly, homotetramer.

The catalysed reaction is carboxy-S-adenosyl-L-methionine + 5-hydroxyuridine(34) in tRNA = 5-carboxymethoxyuridine(34) in tRNA + S-adenosyl-L-homocysteine + H(+). In terms of biological role, catalyzes carboxymethyl transfer from carboxy-S-adenosyl-L-methionine (Cx-SAM) to 5-hydroxyuridine (ho5U) to form 5-carboxymethoxyuridine (cmo5U) at position 34 in tRNAs. The polypeptide is tRNA U34 carboxymethyltransferase (Salmonella typhimurium (strain LT2 / SGSC1412 / ATCC 700720)).